We begin with the raw amino-acid sequence, 948 residues long: Protein translocase subunit SecA (948 aa).

ATP is bound by residues Gln-91, 109–113, and Asp-509; that span reads GEGKT.

The protein belongs to the SecA family. In terms of assembly, monomer and homodimer. Part of the essential Sec protein translocation apparatus which comprises SecA, SecYEG and auxiliary proteins SecDF. Other proteins may also be involved.

Its subcellular location is the cell inner membrane. The protein resides in the cellular thylakoid membrane. It is found in the cytoplasm. It catalyses the reaction ATP + H2O + cellular proteinSide 1 = ADP + phosphate + cellular proteinSide 2.. Its function is as follows. Part of the Sec protein translocase complex. Interacts with the SecYEG preprotein conducting channel. Has a central role in coupling the hydrolysis of ATP to the transfer of proteins into and across the cell membrane, serving as an ATP-driven molecular motor driving the stepwise translocation of polypeptide chains across the membrane. Functionally, probably participates in protein translocation into and across both the cytoplasmic and thylakoid membranes in cyanobacterial cells. The sequence is that of Protein translocase subunit SecA from Synechococcus elongatus (strain ATCC 33912 / PCC 7942 / FACHB-805) (Anacystis nidulans R2).